A 234-amino-acid polypeptide reads, in one-letter code: Phosphoribosylaminoimidazole-succinocarboxamide synthase (234 aa).

Belongs to the SAICAR synthetase family.

It catalyses the reaction 5-amino-1-(5-phospho-D-ribosyl)imidazole-4-carboxylate + L-aspartate + ATP = (2S)-2-[5-amino-1-(5-phospho-beta-D-ribosyl)imidazole-4-carboxamido]succinate + ADP + phosphate + 2 H(+). The protein operates within purine metabolism; IMP biosynthesis via de novo pathway; 5-amino-1-(5-phospho-D-ribosyl)imidazole-4-carboxamide from 5-amino-1-(5-phospho-D-ribosyl)imidazole-4-carboxylate: step 1/2. This chain is Phosphoribosylaminoimidazole-succinocarboxamide synthase, found in Sulfurisphaera tokodaii (strain DSM 16993 / JCM 10545 / NBRC 100140 / 7) (Sulfolobus tokodaii).